The primary structure comprises 228 residues: Putative adhesin RBE_1271 (228 aa).

The signal sequence occupies residues 1 to 22 (MKKLLLIAATSATVLSSALSFA).

The chain is Putative adhesin RBE_1271 from Rickettsia bellii (strain RML369-C).